Here is a 456-residue protein sequence, read N- to C-terminus: MKKKTWFLNFSLFFLQIFTSSNALDVTQFGAVGDGVTDDSQAFLKAWEAVCSGTGDGQFVVPAGMTFMLQPLKFQGSCKSTPVFVQMLGKLVAPSKGNWKGDKDQWILFTDIEGLVIEGDGEINGQGSSWWEHKGSRPTALKFRSCNNLRLSGLTHLDSPMAHIHISECNYVTISSLRINAPESSPNTDGIDVGASSNVVIQDCIIATGDDCIAINSGTSNIHISGIDCGPGHGISIGSLGKDGETATVENVCVQNCNFRGTMNGARIKTWQGGSGYARMITFNGITLDNVENPIIIDQFYNGGDSDNAKDRKSSAVEVSKVVFSNFIGTSKSEYGVDFRCSERVPCTEIFLRDMKIETASSGSGQVAQGQCLNVRGASTIAVPGLECLELSTDMFSSAQLLEQTCMSAQSVQPRTTTQPMQDPIWVFQSRGKQLRVYNIAILVSFISLVTYILAR.

Positions 1-23 are cleaved as a signal peptide; the sequence is MKKKTWFLNFSLFFLQIFTSSNA. 6 PbH1 repeats span residues 169–195, 196–217, 219–239, 249–270, 278–299, and 314–341; these read CNYV…DVGA, SSNV…AINS, TSNI…SIGS, VENV…RIKT, ARMI…IIDQ, and SSAV…DFRC. Residue Asp-210 is the Proton donor of the active site. Residue His-233 is part of the active site.

It belongs to the glycosyl hydrolase 28 family.

It is found in the secreted. It localises to the cell wall. The enzyme catalyses (1,4-alpha-D-galacturonosyl)n+m + H2O = (1,4-alpha-D-galacturonosyl)n + (1,4-alpha-D-galacturonosyl)m.. This chain is Probable polygalacturonase At3g15720, found in Arabidopsis thaliana (Mouse-ear cress).